We begin with the raw amino-acid sequence, 335 residues long: DNA-directed RNA polymerase subunit alpha (335 aa).

The alpha N-terminal domain (alpha-NTD) stretch occupies residues 1–233 (MTRTANEFLT…QQIAIFVDLQ (233 aa)). The segment at 247–335 (VDPILLRPVD…MDDRFAYRSR (89 aa)) is alpha C-terminal domain (alpha-CTD).

It belongs to the RNA polymerase alpha chain family. As to quaternary structure, homodimer. The RNAP catalytic core consists of 2 alpha, 1 beta, 1 beta' and 1 omega subunit. When a sigma factor is associated with the core the holoenzyme is formed, which can initiate transcription.

The catalysed reaction is RNA(n) + a ribonucleoside 5'-triphosphate = RNA(n+1) + diphosphate. DNA-dependent RNA polymerase catalyzes the transcription of DNA into RNA using the four ribonucleoside triphosphates as substrates. This chain is DNA-directed RNA polymerase subunit alpha, found in Acinetobacter baumannii (strain AB307-0294).